Reading from the N-terminus, the 134-residue chain is Proline-rich protein 4 (134 aa).

Residues 1–16 form the signal peptide; sequence MLLVLLSVVLLALSSA. Residues 28–134 form a disordered region; that stretch reads FTFTIPDVED…ARHPQEQPLW (107 aa). Positions 47–59 are enriched in pro residues; that stretch reads QRPPPEGLLPRPP. The span at 110-119 shows a compositional bias: polar residues; sequence VSLQEASSFF. Positions 120 to 134 are enriched in basic and acidic residues; the sequence is QRDRPARHPQEQPLW.

In terms of tissue distribution, abundantly expressed in lacrimal gland where it is found in the acinar cells but not in the intralobular ducts. Also found in the submandibular gland, the parotid and sublingual glands.

The protein localises to the secreted. The polypeptide is Proline-rich protein 4 (PRR4) (Homo sapiens (Human)).